The following is a 150-amino-acid chain: UPF0178 protein BceJ2315_16760 (150 aa).

This sequence belongs to the UPF0178 family.

This chain is UPF0178 protein BceJ2315_16760, found in Burkholderia cenocepacia (strain ATCC BAA-245 / DSM 16553 / LMG 16656 / NCTC 13227 / J2315 / CF5610) (Burkholderia cepacia (strain J2315)).